An 813-amino-acid chain; its full sequence is Protein translocase subunit SecA 2 (813 aa).

Residues glutamine 105, glycine 123–threonine 127, and aspartate 525 contribute to the ATP site.

The protein belongs to the SecA family. In terms of assembly, monomer and homodimer. Part of the essential Sec protein translocation apparatus which comprises SecA, SecYEG and auxiliary proteins SecDF-YajC and YidC.

The protein resides in the cell inner membrane. Its subcellular location is the cytoplasm. It catalyses the reaction ATP + H2O + cellular proteinSide 1 = ADP + phosphate + cellular proteinSide 2.. Functionally, part of the Sec protein translocase complex. Interacts with the SecYEG preprotein conducting channel. Has a central role in coupling the hydrolysis of ATP to the transfer of proteins into and across the cell membrane, serving both as a receptor for the preprotein-SecB complex and as an ATP-driven molecular motor driving the stepwise translocation of polypeptide chains across the membrane. The protein is Protein translocase subunit SecA 2 of Rhodopseudomonas palustris (strain BisA53).